Consider the following 452-residue polypeptide: Protein bfr2 (452 aa).

Basic and acidic residues-rich tracts occupy residues 1 to 10 (MGKVSLKDEL) and 19 to 34 (QERD…SDRE). Residues 1 to 141 (MGKVSLKDEL…SAIPEKDMDR (141 aa)) are disordered. Serine 31, serine 36, and serine 37 each carry phosphoserine. The span at 43-57 (TLGREHYVDVSESKL) shows a compositional bias: basic and acidic residues. A compositionally biased stretch (low complexity) spans 78 to 92 (ELLNSGSLNSQSSSP). Positions 93–106 (SEEEDSEEDENDAV) are enriched in acidic residues.

Belongs to the AATF family.

The protein resides in the nucleus. The protein localises to the nucleolus. The protein is Protein bfr2 (bfr2) of Schizosaccharomyces pombe (strain 972 / ATCC 24843) (Fission yeast).